The following is a 370-amino-acid chain: Propane 2-monooxygenase, reductase component (370 aa).

A compositionally biased stretch (basic residues) spans 1-14 (MAPRPLRRHPPLHH). The interval 1–21 (MAPRPLRRHPPLHHSFHESRR) is disordered. The 2Fe-2S ferredoxin-type domain maps to 28–118 (HRINFEPVDI…DCTIELLNFD (91 aa)). The [2Fe-2S] cluster site is built by C62, C67, C70, and C102. An FAD-binding FR-type domain is found at 128–229 (IQDVRTRVTR…TGPYGSFTIK (102 aa)).

It belongs to the TmoA/XamoA family. The propane 2-monooxygenase multicomponent enzyme system is composed of an electron transfer component and a monooxygenase component interacting with the effector protein PrmD. The electron transfer component is composed of a reductase (PrmB), and the monooxygenase component is formed by a large subunit (PrmA) and a small subunit (PrmC). FAD serves as cofactor. Requires [2Fe-2S] cluster as cofactor.

Reductase component of the propane 2-monooxygenase multicomponent enzyme system which is involved in the degradation of propane via the O2-dependent hydroxylation of propane. Reductase catalyzes the transfer of electrons from NADH or NADPH to monooxygenase. This chain is Propane 2-monooxygenase, reductase component, found in Rhodococcus jostii (strain RHA1).